We begin with the raw amino-acid sequence, 292 residues long: Elongation factor Ts (292 aa).

An involved in Mg(2+) ion dislocation from EF-Tu region spans residues 79 to 82; the sequence is TDFV.

The protein belongs to the EF-Ts family.

Its subcellular location is the cytoplasm. Associates with the EF-Tu.GDP complex and induces the exchange of GDP to GTP. It remains bound to the aminoacyl-tRNA.EF-Tu.GTP complex up to the GTP hydrolysis stage on the ribosome. This Xanthomonas oryzae pv. oryzae (strain MAFF 311018) protein is Elongation factor Ts.